A 332-amino-acid chain; its full sequence is tRNA U34 carboxymethyltransferase (332 aa).

Residues lysine 96, tryptophan 110, lysine 115, glycine 135, 157-159, 190-191, methionine 205, tyrosine 209, and arginine 324 contribute to the carboxy-S-adenosyl-L-methionine site; these read DPT and IE.

This sequence belongs to the class I-like SAM-binding methyltransferase superfamily. CmoB family. Homotetramer.

It catalyses the reaction carboxy-S-adenosyl-L-methionine + 5-hydroxyuridine(34) in tRNA = 5-carboxymethoxyuridine(34) in tRNA + S-adenosyl-L-homocysteine + H(+). Catalyzes carboxymethyl transfer from carboxy-S-adenosyl-L-methionine (Cx-SAM) to 5-hydroxyuridine (ho5U) to form 5-carboxymethoxyuridine (cmo5U) at position 34 in tRNAs. This chain is tRNA U34 carboxymethyltransferase, found in Alteromonas mediterranea (strain DSM 17117 / CIP 110805 / LMG 28347 / Deep ecotype).